A 331-amino-acid chain; its full sequence is Ketol-acid reductoisomerase (NADP(+)) (331 aa).

The region spanning alanine 2 to threonine 182 is the KARI N-terminal Rossmann domain. NADP(+)-binding positions include tyrosine 25–glutamine 28, serine 51, serine 53, and aspartate 83–glutamine 86. Histidine 108 is an active-site residue. Glycine 134 lines the NADP(+) pocket. The 146-residue stretch at threonine 183 to leucine 328 folds into the KARI C-terminal knotted domain. Positions 191, 195, 227, and 231 each coordinate Mg(2+). Serine 252 lines the substrate pocket.

It belongs to the ketol-acid reductoisomerase family. It depends on Mg(2+) as a cofactor.

It carries out the reaction (2R)-2,3-dihydroxy-3-methylbutanoate + NADP(+) = (2S)-2-acetolactate + NADPH + H(+). The enzyme catalyses (2R,3R)-2,3-dihydroxy-3-methylpentanoate + NADP(+) = (S)-2-ethyl-2-hydroxy-3-oxobutanoate + NADPH + H(+). Its pathway is amino-acid biosynthesis; L-isoleucine biosynthesis; L-isoleucine from 2-oxobutanoate: step 2/4. It functions in the pathway amino-acid biosynthesis; L-valine biosynthesis; L-valine from pyruvate: step 2/4. Functionally, involved in the biosynthesis of branched-chain amino acids (BCAA). Catalyzes an alkyl-migration followed by a ketol-acid reduction of (S)-2-acetolactate (S2AL) to yield (R)-2,3-dihydroxy-isovalerate. In the isomerase reaction, S2AL is rearranged via a Mg-dependent methyl migration to produce 3-hydroxy-3-methyl-2-ketobutyrate (HMKB). In the reductase reaction, this 2-ketoacid undergoes a metal-dependent reduction by NADPH to yield (R)-2,3-dihydroxy-isovalerate. The protein is Ketol-acid reductoisomerase (NADP(+)) of Rippkaea orientalis (strain PCC 8801 / RF-1) (Cyanothece sp. (strain PCC 8801)).